Here is a 346-residue protein sequence, read N- to C-terminus: UDP-N-acetylenolpyruvoylglucosamine reductase (346 aa).

Residues 23-194 form the FAD-binding PCMH-type domain; it reads FDVRARLACR…VSVTFRLPKV (172 aa). R170 is an active-site residue. Catalysis depends on S246, which acts as the Proton donor. The active site involves E342.

This sequence belongs to the MurB family. FAD is required as a cofactor.

It localises to the cytoplasm. It catalyses the reaction UDP-N-acetyl-alpha-D-muramate + NADP(+) = UDP-N-acetyl-3-O-(1-carboxyvinyl)-alpha-D-glucosamine + NADPH + H(+). The protein operates within cell wall biogenesis; peptidoglycan biosynthesis. Cell wall formation. The chain is UDP-N-acetylenolpyruvoylglucosamine reductase from Paraburkholderia phymatum (strain DSM 17167 / CIP 108236 / LMG 21445 / STM815) (Burkholderia phymatum).